A 298-amino-acid chain; its full sequence is Inosose dehydratase (298 aa).

This sequence belongs to the IolE/MocC family. Requires glutathione as cofactor. Co(2+) serves as cofactor. The cofactor is Mn(2+).

It carries out the reaction scyllo-inosose = 3D-3,5/4-trihydroxycyclohexane-1,2-dione + H2O. It participates in polyol metabolism; myo-inositol degradation into acetyl-CoA; acetyl-CoA from myo-inositol: step 2/7. Its function is as follows. Catalyzes the dehydration of inosose (2-keto-myo-inositol, 2KMI or 2,4,6/3,5-pentahydroxycyclohexanone) to 3D-(3,5/4)-trihydroxycyclohexane-1,2-dione (D-2,3-diketo-4-deoxy-epi-inositol). The chain is Inosose dehydratase from Lacticaseibacillus casei (Lactobacillus casei).